The sequence spans 509 residues: L-arabinose isomerase (509 aa).

The Mn(2+) site is built by E313, E340, H357, and H456.

Belongs to the arabinose isomerase family. Mn(2+) serves as cofactor.

It catalyses the reaction beta-L-arabinopyranose = L-ribulose. The protein operates within carbohydrate degradation; L-arabinose degradation via L-ribulose; D-xylulose 5-phosphate from L-arabinose (bacterial route): step 1/3. Its function is as follows. Catalyzes the conversion of L-arabinose to L-ribulose. This is L-arabinose isomerase from Phocaeicola vulgatus (strain ATCC 8482 / DSM 1447 / JCM 5826 / CCUG 4940 / NBRC 14291 / NCTC 11154) (Bacteroides vulgatus).